A 360-amino-acid chain; its full sequence is Peptide chain release factor 1 (360 aa).

Position 235 is an N5-methylglutamine (Q235). Residues 281–310 (AERQRQDAAQAESRRLQVGSGDRSQRIRTY) are disordered.

This sequence belongs to the prokaryotic/mitochondrial release factor family. Post-translationally, methylated by PrmC. Methylation increases the termination efficiency of RF1.

It is found in the cytoplasm. Peptide chain release factor 1 directs the termination of translation in response to the peptide chain termination codons UAG and UAA. This Stenotrophomonas maltophilia (strain K279a) protein is Peptide chain release factor 1.